We begin with the raw amino-acid sequence, 270 residues long: Cross-pathway control protein 1 (270 aa).

2 disordered regions span residues 114–135 and 153–213; these read QAQAQVQTQPQTQTQTEQQTQP and QTVH…IIVE. Positions 184 to 195 are enriched in low complexity; it reads SVSPPSGRHSSV. The bZIP domain occupies 216–270; sequence SDVVAMKRARNTLAARKSRERKAQRLEELEAKIEELIAERDRWKNLALAHGASTE. The segment at 222-240 is basic motif; the sequence is KRARNTLAARKSRERKAQR. The leucine-zipper stretch occupies residues 241 to 248; it reads LEELEAKI.

This sequence belongs to the bZIP family. GCN4 subfamily. In terms of assembly, binds DNA as a dimer.

It localises to the nucleus. In N.crassa grown under amino acid starvation conditions, this protein is required for increasing the transcription of the genes coding for many amino acid biosynthetic pathways enzymes. This transcription factor binds and recognize the DNA sequence: 5'-TGACTC-3'. This Neurospora crassa (strain ATCC 24698 / 74-OR23-1A / CBS 708.71 / DSM 1257 / FGSC 987) protein is Cross-pathway control protein 1 (cpc-1).